The primary structure comprises 224 residues: Germin-like protein 1-2 (224 aa).

The N-terminal stretch at 1–29 (MASSRSVVLRVLVAVAVVAAAGAPRLAVA) is a signal peptide. The cysteines at positions 38 and 53 are disulfide-linked. The Cupin type-1 domain maps to 67 to 215 (DAIVQAPSTS…TFLMGEDEVG (149 aa)). Asn-82 carries N-linked (GlcNAc...) asparagine glycosylation. His-115, His-117, Glu-122, and His-161 together coordinate Mn(2+). Residue Asn-170 is glycosylated (N-linked (GlcNAc...) asparagine).

It belongs to the germin family. As to quaternary structure, oligomer (believed to be a pentamer but probably hexamer).

It is found in the secreted. The protein localises to the extracellular space. It localises to the apoplast. Functionally, may play a role in plant defense. Probably has no oxalate oxidase activity even if the active site is conserved. This chain is Germin-like protein 1-2, found in Oryza sativa subsp. japonica (Rice).